The following is a 721-amino-acid chain: Dipeptidyl-peptidase 5 (721 aa).

The first 18 residues, 1–18 (MGAFRWLSIAAAASTALA), serve as a signal peptide directing secretion. N-linked (GlcNAc...) asparagine glycosylation is found at Asn75, Asn94, Asn151, and Asn254. Positions 271 to 297 (ARPINGPDSPGTPKGIKGDSSSPVFSP) are disordered. Residues Asn380 and Asn450 are each glycosylated (N-linked (GlcNAc...) asparagine). Catalysis depends on Ser560, which acts as the Charge relay system. N-linked (GlcNAc...) asparagine glycosylation occurs at Asn607. Residues Asp643 and His675 each act as charge relay system in the active site.

It belongs to the peptidase S9C family. Post-translationally, N-glycosylated. Expressed in mycelia and conidia.

Its subcellular location is the secreted. May be involved in metabolism of dipeptides or may affect host defense mechanisms. Has a substrate specificity limited to the hydrolysis of X-Ala, His-Ser, and Ser-Tyr dipeptides at a neutral pH optimum. The sequence is that of Dipeptidyl-peptidase 5 from Aspergillus fumigatus (strain ATCC MYA-4609 / CBS 101355 / FGSC A1100 / Af293) (Neosartorya fumigata).